Reading from the N-terminus, the 827-residue chain is Villin-1 (827 aa).

The tract at residues 1–126 (MTKLNAQVKG…IRKGGVASGM (126 aa)) is necessary for homodimerization. The segment at 1–734 (MTKLNAQVKG…YEDLKAELGN (734 aa)) is core. A Gelsolin-like 1 repeat occupies 28-107 (QMVPVSSSTY…EVQGNESEAF (80 aa)). LPA/PIP2-binding site stretches follow at residues 112 to 119 (KQGIVIRK) and 138 to 146 (RLLHVKGKR). Gelsolin-like repeat units lie at residues 148-216 (VVAG…GEDE) and 269-342 (EVAT…SAVF). Phosphoserine is present on Ser-366. Gelsolin-like repeat units lie at residues 409–489 (DLVP…PHLM), 528–595 (TKAF…ANFW), and 634–707 (TEIP…PPTF). Residue Ser-735 is modified to Phosphoserine. The HP domain maps to 761 to 827 (SGPLPIFPLE…QNLKKEKGLF (67 aa)). Residues 816-824 (KQQNLKKEK) are LPA/PIP2-binding site 3.

It belongs to the villin/gelsolin family. As to quaternary structure, monomer. Homodimer; homodimerization is necessary for actin-bundling. Associates with F-actin; phosphorylation at tyrosine residues decreases the association with F-actin. Interacts (phosphorylated at C-terminus tyrosine phosphorylation sites) with PLCG1 (via the SH2 domains). Interacts (phosphorylated form) with PLCG1; the interaction is enhanced by hepatocyte growth factor (HGF). Post-translationally, phosphorylated on tyrosine residues by SRC. The unphosphorylated form increases the initial rate of actin-nucleating activity, whereas the tyrosine-phosphorylated form inhibits actin-nucleating activity, enhances actin-bundling activity and enhances actin-severing activity by reducing high Ca(2+) requirements. The tyrosine-phosphorylated form does not regulate actin-capping activity. Tyrosine phosphorylation is essential for cell migration: tyrosine phosphorylation sites in the N-terminus half regulate actin reorganization and cell morphology, whereas tyrosine phosphorylation sites in the C-terminus half regulate cell migration. Tyrosine phosphorylation is induced by epidermal growth factor (EGF) and stimulates cell migration.

It localises to the cytoplasm. The protein localises to the cytoskeleton. Its subcellular location is the cell projection. It is found in the lamellipodium. The protein resides in the ruffle. It localises to the microvillus. The protein localises to the filopodium tip. Its subcellular location is the filopodium. Its function is as follows. Epithelial cell-specific Ca(2+)-regulated actin-modifying protein that modulates the reorganization of microvillar actin filaments. Plays a role in the actin nucleation, actin filament bundle assembly, actin filament capping and severing. Binds phosphatidylinositol 4,5-bisphosphate (PIP2) and lysophosphatidic acid (LPA); binds LPA with higher affinity than PIP2. Binding to LPA increases its phosphorylation by SRC and inhibits all actin-modifying activities. Binding to PIP2 inhibits actin-capping and -severing activities but enhances actin-bundling activity. Regulates the intestinal epithelial cell morphology, cell invasion, cell migration and apoptosis. Protects against apoptosis induced by dextran sodium sulfate (DSS) in the gastrointestinal epithelium. Appears to regulate cell death by maintaining mitochondrial integrity. Enhances hepatocyte growth factor (HGF)-induced epithelial cell motility, chemotaxis and wound repair. The chain is Villin-1 (VIL1) from Sus scrofa (Pig).